The sequence spans 427 residues: Flavohemoprotein (427 aa).

Positions 30–168 (ELNESQKQYI…LAKILIDSEK (139 aa)) constitute a Globin domain. Histidine 114 contacts heme b. Active-site charge relay system residues include tyrosine 124 and glutamate 167. Positions 176–427 (WNGFVEFKVT…QSEFFGPYIP (252 aa)) are reductase. The FAD-binding FR-type domain occupies 177–285 (NGFVEFKVTE…SPPAGNFVYK (109 aa)). Residues tyrosine 216 and 232-235 (REYS) each bind FAD. 301-306 (GIGITP) is a binding site for NADP(+). 421-424 (FFGP) contacts FAD.

Belongs to the globin family. Two-domain flavohemoproteins subfamily. The protein in the C-terminal section; belongs to the flavoprotein pyridine nucleotide cytochrome reductase family. FAD serves as cofactor. Heme b is required as a cofactor.

The protein resides in the cytoplasm. The protein localises to the nucleus. It catalyses the reaction 2 nitric oxide + NADPH + 2 O2 = 2 nitrate + NADP(+) + H(+). The enzyme catalyses 2 nitric oxide + NADH + 2 O2 = 2 nitrate + NAD(+) + H(+). In terms of biological role, is involved in NO detoxification in an aerobic process, termed nitric oxide dioxygenase (NOD) reaction that utilizes O(2) and NAD(P)H to convert NO to nitrate, which protects the fungus from various noxious nitrogen compounds. Therefore, plays a central role in the inducible response to nitrosative stress. Functionally, in the presence of oxygen and NADH, it has NADH oxidase activity, which leads to the generation of superoxide and H(2)O(2). Under anaerobic conditions, it also exhibits nitric oxide reductase and FAD reductase activities. However, all these reactions are much lower than NOD activity. This chain is Flavohemoprotein, found in Schizosaccharomyces pombe (strain 972 / ATCC 24843) (Fission yeast).